The following is a 248-amino-acid chain: Triosephosphate isomerase (248 aa).

Residues Asn-11 and Lys-13 each contribute to the substrate site. His-95 functions as the Electrophile in the catalytic mechanism. Glu-165 (proton acceptor) is an active-site residue.

Belongs to the triosephosphate isomerase family. As to quaternary structure, homodimer.

The protein localises to the cytoplasm. It carries out the reaction D-glyceraldehyde 3-phosphate = dihydroxyacetone phosphate. The catalysed reaction is dihydroxyacetone phosphate = methylglyoxal + phosphate. Its pathway is carbohydrate degradation; glycolysis; D-glyceraldehyde 3-phosphate from glycerone phosphate: step 1/1. It functions in the pathway carbohydrate biosynthesis; gluconeogenesis. In terms of biological role, triosephosphate isomerase is an extremely efficient metabolic enzyme that catalyzes the interconversion between dihydroxyacetone phosphate (DHAP) and D-glyceraldehyde-3-phosphate (G3P) in glycolysis and gluconeogenesis. Its function is as follows. It is also responsible for the non-negligible production of methylglyoxal a reactive cytotoxic side-product that modifies and can alter proteins, DNA and lipids. The polypeptide is Triosephosphate isomerase (tpi1) (Oryzias latipes (Japanese rice fish)).